The following is a 154-amino-acid chain: uncharacterized protein (154 aa).

The tract at residues 1–37 (MDNLKEKPLSYNINNNNLNNNNNNNNNNNNNNNNINN) is disordered. Positions 12 to 37 (NINNNNLNNNNNNNNNNNNNNNNINN) are enriched in low complexity. Asn-82 is a glycosylation site (N-linked (GlcNAc...) asparagine). A helical transmembrane segment spans residues 116–136 (IIITTIVVLLMIAVSLGLILA). N-linked (GlcNAc...) asparagine glycosylation occurs at Asn-149.

The protein resides in the membrane. This is an uncharacterized protein from Dictyostelium discoideum (Social amoeba).